Consider the following 239-residue polypeptide: LexA repressor (239 aa).

The segment at residues 26–46 is a DNA-binding region (H-T-H motif); that stretch reads FDEMKDALDLASKSGIHRLIT. A disordered region spans residues 84 to 107; it reads SPSVIEGSLGKPQPVATPAPAKSV. Active-site for autocatalytic cleavage activity residues include serine 159 and lysine 197.

The protein belongs to the peptidase S24 family. As to quaternary structure, homodimer.

The catalysed reaction is Hydrolysis of Ala-|-Gly bond in repressor LexA.. Its function is as follows. Represses a number of genes involved in the response to DNA damage (SOS response), including recA and lexA. In the presence of single-stranded DNA, RecA interacts with LexA causing an autocatalytic cleavage which disrupts the DNA-binding part of LexA, leading to derepression of the SOS regulon and eventually DNA repair. The protein is LexA repressor of Rhizobium johnstonii (strain DSM 114642 / LMG 32736 / 3841) (Rhizobium leguminosarum bv. viciae).